Consider the following 307-residue polypeptide: D-alanine--D-alanine ligase (307 aa).

One can recognise an ATP-grasp domain in the interval 101–301 (KDVLRAAGVP…FGELVRWMVE (201 aa)). 128-182 (MTPPYVVKPLGEGSSFGVIIVRADQTHPPQELTRDDWAYGDLVLVERFVAGRELT) contacts ATP. Mg(2+) contacts are provided by D251, E268, and N270.

This sequence belongs to the D-alanine--D-alanine ligase family. Requires Mg(2+) as cofactor. It depends on Mn(2+) as a cofactor.

It is found in the cytoplasm. The enzyme catalyses 2 D-alanine + ATP = D-alanyl-D-alanine + ADP + phosphate + H(+). The protein operates within cell wall biogenesis; peptidoglycan biosynthesis. In terms of biological role, cell wall formation. The sequence is that of D-alanine--D-alanine ligase from Methylocella silvestris (strain DSM 15510 / CIP 108128 / LMG 27833 / NCIMB 13906 / BL2).